The sequence spans 76 residues: Tautomerase PptA (76 aa).

Pro2 serves as the catalytic Proton acceptor; via imino nitrogen.

The protein belongs to the 4-oxalocrotonate tautomerase family. PptA subfamily. In terms of assembly, homodimer.

The protein resides in the cytoplasm. In Cronobacter sakazakii (strain ATCC BAA-894) (Enterobacter sakazakii), this protein is Tautomerase PptA.